Consider the following 369-residue polypeptide: Saccharopine dehydrogenase [NAD(+), L-lysine-forming] (369 aa).

2 residues coordinate L-saccharopine: Arg19 and Lys78. Lys78 serves as the catalytic Proton acceptor. The active-site Proton donor is His96. Gln101 is an L-saccharopine binding site. Arg130 is an NAD(+) binding site. The L-saccharopine site is built by Arg131 and Phe135. NAD(+)-binding positions include 203 to 204, Asp227, Thr231, Tyr251, and Val278; that span reads GR. Cysteines 205 and 249 form a disulfide. 279-281 is a binding site for L-saccharopine; that stretch reads SAD. 318 to 321 contributes to the NAD(+) binding site; sequence IDHL.

Belongs to the AlaDH/PNT family. As to quaternary structure, monomer.

It carries out the reaction L-saccharopine + NAD(+) + H2O = L-lysine + 2-oxoglutarate + NADH + H(+). It functions in the pathway amino-acid biosynthesis; L-lysine biosynthesis via AAA pathway; L-lysine from L-alpha-aminoadipate (fungal route): step 3/3. Catalyzes the NAD(+)-dependent cleavage of saccharopine to L-lysine and 2-oxoglutarate, the final step in the alpha-aminoadipate (AAA) pathway for lysin biosynthesis. The sequence is that of Saccharopine dehydrogenase [NAD(+), L-lysine-forming] from Yarrowia lipolytica (strain CLIB 122 / E 150) (Yeast).